The chain runs to 209 residues: FMN-dependent NADH:quinone oxidoreductase (209 aa).

FMN-binding positions include Ser-18, 102 to 105, and 146 to 149; these read MYNF and SRGG.

Belongs to the azoreductase type 1 family. Homodimer. The cofactor is FMN.

The catalysed reaction is 2 a quinone + NADH + H(+) = 2 a 1,4-benzosemiquinone + NAD(+). The enzyme catalyses N,N-dimethyl-1,4-phenylenediamine + anthranilate + 2 NAD(+) = 2-(4-dimethylaminophenyl)diazenylbenzoate + 2 NADH + 2 H(+). Quinone reductase that provides resistance to thiol-specific stress caused by electrophilic quinones. Its function is as follows. Also exhibits azoreductase activity. Catalyzes the reductive cleavage of the azo bond in aromatic azo compounds to the corresponding amines. The chain is FMN-dependent NADH:quinone oxidoreductase from Saccharophagus degradans (strain 2-40 / ATCC 43961 / DSM 17024).